Reading from the N-terminus, the 904-residue chain is Protein translocase subunit SecA (904 aa).

ATP contacts are provided by residues Q89, 107–111 (GEGKT), and D496. The disordered stretch occupies residues 870-904 (GGFQELSSGTPSPTVTVTTSSGGGTERKTSRRRKR). The segment covering 876-889 (SSGTPSPTVTVTTS) has biased composition (low complexity).

The protein belongs to the SecA family. In terms of assembly, monomer and homodimer. Part of the essential Sec protein translocation apparatus which comprises SecA, SecYEG and auxiliary proteins SecDF. Other proteins may also be involved.

The protein localises to the cell inner membrane. The protein resides in the cytoplasm. The catalysed reaction is ATP + H2O + cellular proteinSide 1 = ADP + phosphate + cellular proteinSide 2.. Its function is as follows. Part of the Sec protein translocase complex. Interacts with the SecYEG preprotein conducting channel. Has a central role in coupling the hydrolysis of ATP to the transfer of proteins into and across the cell membrane, serving as an ATP-driven molecular motor driving the stepwise translocation of polypeptide chains across the membrane. This Leptospira borgpetersenii serovar Hardjo-bovis (strain L550) protein is Protein translocase subunit SecA.